The primary structure comprises 790 residues: AMP deaminase (790 aa).

Residues 1 to 14 show a composition bias toward polar residues; the sequence is MSTPLRGSSPQVSF. A disordered region spans residues 1-26; the sequence is MSTPLRGSSPQVSFYESELDQEGGSD. Zn(2+) contacts are provided by histidine 221 and histidine 223. Residues histidine 223 and 292–297 contribute to the substrate site; that span reads KFNLKY. Residue histidine 488 coordinates Zn(2+). Glutamate 491 lines the substrate pocket. The Proton acceptor role is filled by histidine 510. Aspartate 565 is a Zn(2+) binding site. 566 to 569 contacts substrate; it reads DPLQ. Disordered stretches follow at residues 698–726 and 739–790; these read NKLR…SSPG and PPPL…KSDK. Composition is skewed to low complexity over residues 706-726 and 750-781; these read GSTP…SSPG and NNNN…TTTN.

This sequence belongs to the metallo-dependent hydrolases superfamily. Adenosine and AMP deaminases family. As to quaternary structure, homodimer. The cofactor is Zn(2+).

The protein resides in the cytoplasm. It catalyses the reaction AMP + H2O + H(+) = IMP + NH4(+). It participates in purine metabolism; IMP biosynthesis via salvage pathway; IMP from AMP: step 1/1. Its activity is regulated as follows. Activated by ATP, inhibited by GTP, EDTA and inorganic phosphate. Catalyzes the conversion of adenosine monophosphate (AMP) to inosine monophosphate (IMP) and ammonia (NH4(+)). Participates in the regulation of the adenylated nucleotide pool and the interconversion to guanylated nucleotides during early morphodifferentiation. This is AMP deaminase (amdA) from Dictyostelium discoideum (Social amoeba).